Consider the following 270-residue polypeptide: NFAT activation molecule 1 (270 aa).

The N-terminal stretch at 1–42 (MENQPVRWRALPGLPRPPGLPAAPWLLLGVLLLPGTLRLAGG) is a signal peptide. Residues 43-163 (QSVTHTGLPI…YREPPQSPQK (121 aa)) lie on the Extracellular side of the membrane. The Ig-like V-type domain occupies 50–150 (LPIMASLANT…RGSGTFILVR (101 aa)). A disulfide bond links Cys65 and Cys114. A glycan (N-linked (GlcNAc...) asparagine) is linked at Asn107. A helical membrane pass occupies residues 164 to 184 (LLLFGFTGLLSVLSVVGTALL). Residues 185–270 (LWNKKRMRGP…GELNLVYENL (86 aa)) lie on the Cytoplasmic side of the membrane. Residues 190–219 (RMRGPGKDPTRKCPDPRSASSPKQHPSESV) are disordered. Positions 194-204 (PGKDPTRKCPD) are enriched in basic and acidic residues. The segment covering 207 to 219 (SASSPKQHPSESV) has biased composition (polar residues). The ITAM domain occupies 209-237 (SSPKQHPSESVYTALQRRETEVYACIENE). Phosphotyrosine is present on residues Tyr220 and Tyr231. The segment at 234 to 262 (IENEDGSSPTAKQSPLSQERPHRFEDDGE) is disordered. The segment covering 239-250 (GSSPTAKQSPLS) has biased composition (polar residues).

In terms of assembly, no direct interaction with the B-cell antigen receptor (BCR). Interacts with SYK; probably involved in BCR signaling. Interacts with ZAP70. N-glycosylated. Highly expressed in neutrophils, primary monocytes, mast cells, monocytic cell lines and lymphocytes. Also expressed in spleen B and T-cells, and lung. Expressed at low level in non-immune tissue.

The protein localises to the cell membrane. Its function is as follows. May function in immune system as a receptor which activates via the calcineurin/NFAT-signaling pathway the downstream cytokine gene promoters. Activates the transcription of IL-13 and TNF-alpha promoters. May be involved in the regulation of B-cell, but not T-cell, development. Overexpression activates downstream effectors without ligand binding or antibody cross-linking. The polypeptide is NFAT activation molecule 1 (NFAM1) (Homo sapiens (Human)).